Consider the following 272-residue polypeptide: uncharacterized protein (272 aa).

Positions 1–27 constitute an HTH merR-type domain; the sequence is MDTLAFINRALVEEGYSLKDIKLVLIT.

This is an uncharacterized protein from Aquifex aeolicus (strain VF5).